The sequence spans 425 residues: Isocitrate dehydrogenase [NADP] (425 aa).

Thr114 serves as a coordination point for NADP(+). Residues Ser123, Asn125, Arg129, Arg139, and Arg162 each coordinate D-threo-isocitrate. Position 316 (Asp316) interacts with Mg(2+). NADP(+)-binding positions include 348–354, Asn361, Tyr400, and Arg404; that span reads HGTAPKY.

Belongs to the isocitrate and isopropylmalate dehydrogenases family. Homodimer. Mg(2+) serves as cofactor. Requires Mn(2+) as cofactor.

The catalysed reaction is D-threo-isocitrate + NADP(+) = 2-oxoglutarate + CO2 + NADPH. Its function is as follows. Catalyzes the oxidative decarboxylation of isocitrate to 2-oxoglutarate and carbon dioxide with the concomitant reduction of NADP(+). This Helicobacter pylori (strain J99 / ATCC 700824) (Campylobacter pylori J99) protein is Isocitrate dehydrogenase [NADP] (icd).